Reading from the N-terminus, the 199-residue chain is Photosystem II D1 precursor processing protein PSB27-H2, chloroplastic (199 aa).

This sequence belongs to the Psb27 family. In terms of assembly, interacts with the C-terminus of both the precursor and mature form of D1.

Its subcellular location is the plastid. It is found in the chloroplast thylakoid lumen. Its function is as follows. Required, but not essential, for D1 (psbA) precursor processing and thus correct photosystem II assembly (PSII). In Arabidopsis thaliana (Mouse-ear cress), this protein is Photosystem II D1 precursor processing protein PSB27-H2, chloroplastic (PSB27-2).